A 767-amino-acid chain; its full sequence is Protein transport protein Sec23A (767 aa).

The Zn(2+) site is built by Cys61, Cys66, Cys85, and Cys88. One copy of the Gelsolin-like repeat lies at 634–720; the sequence is PEPVLLDSSS…EHGGSQARFL (87 aa).

This sequence belongs to the SEC23/SEC24 family. SEC23 subfamily. In terms of assembly, COPII is composed of at least five proteins: the Sec23/24 complex, the Sec13/31 complex and Sar1.

The protein resides in the cytoplasmic vesicle. It localises to the COPII-coated vesicle membrane. The protein localises to the endoplasmic reticulum membrane. Its subcellular location is the cytoplasm. It is found in the cytosol. Its function is as follows. Component of the coat protein complex II (COPII) which promotes the formation of transport vesicles from the endoplasmic reticulum (ER). The coat has two main functions, the physical deformation of the endoplasmic reticulum membrane into vesicles and the selection of cargo molecules for their transport to the Golgi complex. This chain is Protein transport protein Sec23A, found in Gallus gallus (Chicken).